The sequence spans 124 residues: Large ribosomal subunit protein eL31 (124 aa).

The protein belongs to the eukaryotic ribosomal protein eL31 family.

This is Large ribosomal subunit protein eL31 (RpL31) from Aedes aegypti (Yellowfever mosquito).